The following is a 160-amino-acid chain: Ribosomal RNA large subunit methyltransferase H (160 aa).

S-adenosyl-L-methionine-binding residues include Leu76 and Gly108.

It belongs to the RNA methyltransferase RlmH family. As to quaternary structure, homodimer.

Its subcellular location is the cytoplasm. It catalyses the reaction pseudouridine(1915) in 23S rRNA + S-adenosyl-L-methionine = N(3)-methylpseudouridine(1915) in 23S rRNA + S-adenosyl-L-homocysteine + H(+). Specifically methylates the pseudouridine at position 1915 (m3Psi1915) in 23S rRNA. In Rhodopseudomonas palustris (strain TIE-1), this protein is Ribosomal RNA large subunit methyltransferase H.